A 290-amino-acid chain; its full sequence is uncharacterized protein (290 aa).

5 consecutive transmembrane segments (helical) span residues 14-34 (ALLNIFAYVILAVVKLVIGIL), 82-102 (ISSLVASFIMMAVGIEVLIGG), 115-135 (NLIAAWTALGSAVFMYGIYLY), 158-174 (DAFVSAGAFIGVFSSQL), and 176-196 (LPWVDPVTAFIIGIIICKTAW).

Belongs to the cation diffusion facilitator (CDF) transporter (TC 2.A.4) family.

Its subcellular location is the cell membrane. This is an uncharacterized protein from Bacillus subtilis (strain 168).